An 879-amino-acid polypeptide reads, in one-letter code: Beta-mannosidase (879 aa).

The N-terminal stretch at Met1 to Ala17 is a signal peptide. N-linked (GlcNAc...) asparagine glycans are attached at residues Asn35 and Asn77. Cys167 and Cys176 form a disulfide bridge. Trp190–Trp192 is a binding site for substrate. Asn297 and Asn302 each carry an N-linked (GlcNAc...) asparagine glycan. Residue Asn456 coordinates substrate. Glu457 serves as the catalytic Proton donor. 3 cysteine pairs are disulfide-bonded: Cys540/Cys629, Cys732/Cys761, and Cys764/Cys769. Glu554 (nucleophile) is an active-site residue. A glycan (N-linked (GlcNAc...) asparagine) is linked at Asn607. A glycan (N-linked (GlcNAc...) asparagine) is linked at Asn803.

It belongs to the glycosyl hydrolase 2 family. In terms of assembly, monomer. In terms of processing, the N-terminus is blocked. Post-translationally, N-glycosylated. In terms of tissue distribution, detected in kidney (at protein level). Highest expression is found in thyroid tissue. The amount of transcript is significantly higher in normal tissues than in tissues affected by the disease.

The protein localises to the lysosome. The enzyme catalyses Hydrolysis of terminal, non-reducing beta-D-mannose residues in beta-D-mannosides.. Its pathway is glycan metabolism; N-glycan degradation. Functionally, exoglycosidase that cleaves the single beta-linked mannose residue from the non-reducing end of all N-linked glycoprotein oligosaccharides. This chain is Beta-mannosidase (MANBA), found in Bos taurus (Bovine).